The chain runs to 1923 residues: Endoribonuclease Dicer (1923 aa).

One can recognise a Helicase ATP-binding domain in the interval 51–227 (LLEAALDHNT…ELEEKIQKLE (177 aa)). Residue 64 to 71 (LNTGSGKT) coordinates ATP. The DECH box motif lies at 175–178 (DECH). The required for interaction with PRKRA and TARBP2 stretch occupies residues 256 to 595 (DCGPFTDRSG…LRNKCSKSVD (340 aa)). Residues 410 to 433 (VSWSDSEDDEEDEEIEEKEKPETN) are disordered. 2 positions are modified to phosphoserine: serine 413 and serine 415. The span at 414 to 425 (DSEDDEEDEEIE) shows a compositional bias: acidic residues. A Helicase C-terminal domain is found at 433 to 602 (NFPSPFTNIL…SVDTGEADTE (170 aa)). In terms of domain architecture, Dicer dsRNA-binding fold spans 629-721 (AIGHVNRYCA…MPVGKETVKY (93 aa)). The PAZ domain maps to 894 to 1041 (KFMEDIEKSE…LVPELCAIHP (148 aa)). Phosphoserine occurs at positions 1015 and 1160. Polar residues-rich tracts occupy residues 1246–1255 (NANTSTSDGS) and 1277–1290 (SEQSPSPGYSSRTL). Residues 1246-1291 (NANTSTSDGSPVTAAVPGTTETGEAPPDRTASEQSPSPGYSSRTLG) are disordered. Positions 1276–1404 (ASEQSPSPGY…TEKWEKDEMT (129 aa)) constitute an RNase III 1 domain. Residues glutamate 1316, glutamate 1396, and glutamate 1399 each contribute to the Mg(2+) site. Phosphoserine is present on residues serine 1461, serine 1469, and serine 1471. An RNase III 2 domain is found at 1667–1825 (FENFEKKINY…LAGAIYMDSG (159 aa)). Residues glutamate 1706, aspartate 1811, and glutamate 1814 each contribute to the Mg(2+) site. A DRBM domain is found at 1853-1915 (SPVRELLEME…ARRALRSLKA (63 aa)). The residue at position 1869 (serine 1869) is a Phosphoserine.

The protein belongs to the helicase family. Dicer subfamily. Component of the RISC loading complex (RLC), or micro-RNA (miRNA) loading complex (miRLC), which is composed of DICER1, AGO2 and TARBP2; DICER1 and TARBP2 are required to process precursor miRNAs (pre-miRNAs) to mature miRNAs and then load them onto AGO2. Note that the trimeric RLC/miRLC is also referred to as RISC. Interacts with DHX9, AGO1, PIWIL1 and PRKRA. Interacts with AGO2, TARBP2, EIF6, MOV10 and RPL7A (60S ribosome subunit); they form a large RNA-induced silencing complex (RISC). Interacts with BCDIN3D. Interacts (via Dicer dsRNA-binding fold domain) with ALOX5 (via PLAT domain); this interaction enhances arachidonate 5-lipoxygenase activity and modifies the miRNA precursor processing activity of DICER1. Mg(2+) is required as a cofactor. Requires Mn(2+) as cofactor.

It is found in the cytoplasm. It carries out the reaction Endonucleolytic cleavage to 5'-phosphomonoester.. Its function is as follows. Double-stranded RNA (dsRNA) endoribonuclease playing a central role in short dsRNA-mediated post-transcriptional gene silencing. Cleaves naturally occurring long dsRNAs and short hairpin pre-microRNAs (miRNA) into fragments of twenty-one to twenty-three nucleotides with 3' overhang of two nucleotides, producing respectively short interfering RNAs (siRNA) and mature microRNAs. SiRNAs and miRNAs serve as guide to direct the RNA-induced silencing complex (RISC) to complementary RNAs to degrade them or prevent their translation. Gene silencing mediated by siRNAs, also called RNA interference, controls the elimination of transcripts from mobile and repetitive DNA elements of the genome but also the degradation of exogenous RNA of viral origin for instance. The miRNA pathway on the other side is a mean to specifically regulate the expression of target genes. The chain is Endoribonuclease Dicer (DICER1) from Bos taurus (Bovine).